The sequence spans 89 residues: Elongation factor 1-beta (89 aa).

The protein belongs to the EF-1-beta/EF-1-delta family.

Its function is as follows. Promotes the exchange of GDP for GTP in EF-1-alpha/GDP, thus allowing the regeneration of EF-1-alpha/GTP that could then be used to form the ternary complex EF-1-alpha/GTP/AAtRNA. This chain is Elongation factor 1-beta, found in Methanococcus maripaludis (strain DSM 14266 / JCM 13030 / NBRC 101832 / S2 / LL).